The chain runs to 370 residues: S-adenosylmethionine decarboxylase proenzyme (370 aa).

F28 lines the substrate pocket. Catalysis depends on residues E29 and E32. Residue E85 participates in substrate binding. The active-site Schiff-base intermediate with substrate; via pyruvic acid is the S86. The residue at position 86 (S86) is a Pyruvic acid (Ser); by autocatalysis. The Proton donor; for catalytic activity role is filled by C100. Active-site proton acceptor; for processing activity residues include S250 and H263. E267 lines the substrate pocket.

Belongs to the eukaryotic AdoMetDC family. In terms of assembly, forms a heterodimer with catalytically inactive AdoMetDC prozyme; heterodimerization is required to activate AdoMetDC. The cofactor is pyruvate. Is synthesized initially as an inactive proenzyme. Formation of the active enzyme involves a self-maturation process in which the active site pyruvoyl group is generated from an internal serine residue via an autocatalytic post-translational modification. Two non-identical subunits are generated from the proenzyme in this reaction, and the pyruvate is formed at the N-terminus of the alpha chain, which is derived from the carboxyl end of the proenzyme. The post-translation cleavage follows an unusual pathway, termed non-hydrolytic serinolysis, in which the side chain hydroxyl group of the serine supplies its oxygen atom to form the C-terminus of the beta chain, while the remainder of the serine residue undergoes an oxidative deamination to the alpha chain.

It catalyses the reaction S-adenosyl-L-methionine + H(+) = S-adenosyl 3-(methylsulfanyl)propylamine + CO2. The protein operates within amine and polyamine biosynthesis; S-adenosylmethioninamine biosynthesis; S-adenosylmethioninamine from S-adenosyl-L-methionine: step 1/1. With respect to regulation, allosterically activated by AdoMetDC prozyme. Activated by putrescine. Inhibited by spermine and methylglyoxal-bis(guanylhydrazone) (MGBG) and slightly by spermidine. Inhibited by 5'-([(Z)-4-amino-2-butenyl]methylamino)-5'-deoxyadenosine (MDL 73811). Its function is as follows. Probably in association with catalytically inactive AdoMetDC prozyme, catalyzes the decarboxylation of S-adenosyl-L-methionine which is essential for the biosynthesis of the polyamine spermidine. Required for growth and survival during the bloodstream life cycle stage. The polypeptide is S-adenosylmethionine decarboxylase proenzyme (Trypanosoma cruzi).